The sequence spans 546 residues: Chaperonin GroEL (546 aa).

ATP is bound by residues 30–33 (TLGP), K51, 87–91 (DGTTT), G415, and D495.

This sequence belongs to the chaperonin (HSP60) family. As to quaternary structure, forms a cylinder of 14 subunits composed of two heptameric rings stacked back-to-back. Interacts with the co-chaperonin GroES.

The protein resides in the cytoplasm. It catalyses the reaction ATP + H2O + a folded polypeptide = ADP + phosphate + an unfolded polypeptide.. Functionally, together with its co-chaperonin GroES, plays an essential role in assisting protein folding. The GroEL-GroES system forms a nano-cage that allows encapsulation of the non-native substrate proteins and provides a physical environment optimized to promote and accelerate protein folding. This Brucella melitensis biotype 2 (strain ATCC 23457) protein is Chaperonin GroEL.